The following is a 261-amino-acid chain: Enolase-phosphatase E1 (261 aa).

Residues Asp-16 and Glu-18 each coordinate Mg(2+). Substrate-binding positions include 150-151 (SS) and Lys-184. Asp-209 is a Mg(2+) binding site.

It belongs to the HAD-like hydrolase superfamily. MasA/MtnC family. In terms of assembly, monomer. The cofactor is Mg(2+).

The protein localises to the cytoplasm. The protein resides in the nucleus. The catalysed reaction is 5-methylsulfanyl-2,3-dioxopentyl phosphate + H2O = 1,2-dihydroxy-5-(methylsulfanyl)pent-1-en-3-one + phosphate. Its pathway is amino-acid biosynthesis; L-methionine biosynthesis via salvage pathway; L-methionine from S-methyl-5-thio-alpha-D-ribose 1-phosphate: step 3/6. The protein operates within amino-acid biosynthesis; L-methionine biosynthesis via salvage pathway; L-methionine from S-methyl-5-thio-alpha-D-ribose 1-phosphate: step 4/6. Bifunctional enzyme that catalyzes the enolization of 2,3-diketo-5-methylthiopentyl-1-phosphate (DK-MTP-1-P) into the intermediate 2-hydroxy-3-keto-5-methylthiopentenyl-1-phosphate (HK-MTPenyl-1-P), which is then dephosphorylated to form the acireductone 1,2-dihydroxy-3-keto-5-methylthiopentene (DHK-MTPene). This chain is Enolase-phosphatase E1 (Enoph1), found in Rattus norvegicus (Rat).